The following is a 359-amino-acid chain: Fructose-bisphosphate aldolase (359 aa).

Serine 50 provides a ligand contact to D-glyceraldehyde 3-phosphate. Aspartate 83 serves as the catalytic Proton donor. Zn(2+) contacts are provided by histidine 84, aspartate 105, glutamate 142, and histidine 198. Glycine 199 lines the dihydroxyacetone phosphate pocket. Zn(2+) is bound at residue histidine 232. Residues 233–235 (GSS) and 275–278 (NIDT) each bind dihydroxyacetone phosphate.

Belongs to the class II fructose-bisphosphate aldolase family. Homodimer. Zn(2+) serves as cofactor.

The catalysed reaction is beta-D-fructose 1,6-bisphosphate = D-glyceraldehyde 3-phosphate + dihydroxyacetone phosphate. Its pathway is carbohydrate biosynthesis; Calvin cycle. The protein operates within carbohydrate degradation; glycolysis; D-glyceraldehyde 3-phosphate and glycerone phosphate from D-glucose: step 4/4. Its function is as follows. Catalyzes the aldol condensation of dihydroxyacetone phosphate (DHAP or glycerone-phosphate) with glyceraldehyde 3-phosphate (G3P) to form fructose 1,6-bisphosphate (FBP) in gluconeogenesis and the reverse reaction in glycolysis. This Sinorhizobium medicae (strain WSM419) (Ensifer medicae) protein is Fructose-bisphosphate aldolase (cbbA).